The following is a 396-amino-acid chain: Elongation factor Tu (396 aa).

In terms of domain architecture, tr-type G spans lysine 10–glutamate 206. A G1 region spans residues glycine 19–threonine 26. Glycine 19–threonine 26 contributes to the GTP binding site. Threonine 26 provides a ligand contact to Mg(2+). The segment at glycine 60 to asparagine 64 is G2. Residues aspartate 81–glycine 84 form a G3 region. GTP-binding positions include aspartate 81 to histidine 85 and asparagine 136 to aspartate 139. Residues asparagine 136–aspartate 139 are G4. The interval serine 174–lysine 176 is G5.

The protein belongs to the TRAFAC class translation factor GTPase superfamily. Classic translation factor GTPase family. EF-Tu/EF-1A subfamily. As to quaternary structure, monomer.

It is found in the cytoplasm. It carries out the reaction GTP + H2O = GDP + phosphate + H(+). In terms of biological role, GTP hydrolase that promotes the GTP-dependent binding of aminoacyl-tRNA to the A-site of ribosomes during protein biosynthesis. The polypeptide is Elongation factor Tu (Ralstonia nicotianae (strain ATCC BAA-1114 / GMI1000) (Ralstonia solanacearum)).